The sequence spans 174 residues: Variant surface antigen F (174 aa).

Positions 1 to 29 (MKKSIFSKKLLFSFGSLVALAAIPLITIS) are cleaved as a signal peptide. The N-palmitoyl cysteine moiety is linked to residue Cys-30. Cys-30 carries S-diacylglycerol cysteine lipidation. The segment at 32–174 (QTNTDQSQQP…PEQGNSQVSK (143 aa)) is disordered. Over residues 43 to 53 (SGSGSGSGTSN) the composition is skewed to gly residues. 9 repeat units span residues 55-67 (SGST…GNNQ), 68-80 (GGST…GNNQ), 81-93 (GGST…GNNQ), 94-106 (GGST…GNNQ), 107-119 (GGST…GNNQ), 120-132 (GGST…GNNQ), 133-145 (GGST…GNNQ), 146-158 (GGST…GNNQ), and 159-171 (GGST…GNSQ). Residues 55 to 171 (SGSTPTPEQG…TPTPEQGNSQ (117 aa)) form a 9 X 13 AA tandem repeats region. Positions 62-174 (EQGNNQGGST…PEQGNSQVSK (113 aa)) are enriched in polar residues.

It is found in the cell membrane. Its function is as follows. Responsible for the antigenic diversity for host adaptation. Expression in E.coli of a construct containing vlpD, vlpE, and vlpF yields antigenically distinguishable products corresponding to each gene. This chain is Variant surface antigen F (vlpF), found in Mesomycoplasma hyorhinis (Mycoplasma hyorhinis).